We begin with the raw amino-acid sequence, 454 residues long: tRNA modification GTPase MnmE (454 aa).

Positions 23, 80, and 120 each coordinate (6S)-5-formyl-5,6,7,8-tetrahydrofolate. A TrmE-type G domain is found at 216 to 377 (GMKVVIAGRP…LRNHLKQSMG (162 aa)). Asparagine 226 serves as a coordination point for K(+). Residues 226–231 (NAGKSS), 245–251 (TDIAGTT), 270–273 (DTAG), 335–338 (NKAD), and 358–360 (SAR) contribute to the GTP site. A Mg(2+)-binding site is contributed by serine 230. The K(+) site is built by threonine 245, isoleucine 247, and threonine 250. Threonine 251 provides a ligand contact to Mg(2+). Residue lysine 454 participates in (6S)-5-formyl-5,6,7,8-tetrahydrofolate binding.

It belongs to the TRAFAC class TrmE-Era-EngA-EngB-Septin-like GTPase superfamily. TrmE GTPase family. In terms of assembly, homodimer. Heterotetramer of two MnmE and two MnmG subunits. The cofactor is K(+).

It localises to the cytoplasm. In terms of biological role, exhibits a very high intrinsic GTPase hydrolysis rate. Involved in the addition of a carboxymethylaminomethyl (cmnm) group at the wobble position (U34) of certain tRNAs, forming tRNA-cmnm(5)s(2)U34. The protein is tRNA modification GTPase MnmE of Escherichia coli O6:K15:H31 (strain 536 / UPEC).